We begin with the raw amino-acid sequence, 357 residues long: Alanine racemase (357 aa).

The active-site Proton acceptor; specific for D-alanine is K35. The residue at position 35 (K35) is an N6-(pyridoxal phosphate)lysine. R131 is a substrate binding site. Catalysis depends on Y256, which acts as the Proton acceptor; specific for L-alanine. M304 contributes to the substrate binding site.

This sequence belongs to the alanine racemase family. The cofactor is pyridoxal 5'-phosphate.

It catalyses the reaction L-alanine = D-alanine. Its pathway is amino-acid biosynthesis; D-alanine biosynthesis; D-alanine from L-alanine: step 1/1. Its function is as follows. Catalyzes the interconversion of L-alanine and D-alanine. May also act on other amino acids. The sequence is that of Alanine racemase (alr) from Legionella pneumophila (strain Corby).